The following is a 1106-amino-acid chain: Probable ATP-citrate synthase (1106 aa).

Positions 358, 360, and 391 each coordinate citrate. Positions 442 to 459 are enriched in polar residues; sequence APQTTGQFLLSPERNTGG. The tract at residues 442–478 is disordered; that stretch reads APQTTGQFLLSPERNTGGTERAPPSPAANATPTEHPL. ATP contacts are provided by residues 701 to 721 and 752 to 778; these read VIRYQNDDRVKMIVLLGEVGG and ITSEVQFGHAGASANALGETAACKNAA. Glu-718 is a binding site for Mg(2+). His-760 functions as the Tele-phosphohistidine intermediate in the catalytic mechanism. 779-789 serves as a coordination point for CoA; it reads LRASGALVPES.

The protein in the N-terminal section; belongs to the succinate/malate CoA ligase beta subunit family. In the C-terminal section; belongs to the succinate/malate CoA ligase alpha subunit family. In terms of assembly, homotetramer.

Its subcellular location is the cytoplasm. The enzyme catalyses oxaloacetate + acetyl-CoA + ADP + phosphate = citrate + ATP + CoA. Its function is as follows. Catalyzes the cleavage of citrate into oxaloacetate and acetyl-CoA, the latter serving as common substrate in multiple biochemical reactions in protein, carbohydrate and lipid metabolism. The sequence is that of Probable ATP-citrate synthase from Caenorhabditis elegans.